Reading from the N-terminus, the 213-residue chain is Uridine kinase (213 aa).

Residue 15 to 22 (GASASGKS) participates in ATP binding.

It belongs to the uridine kinase family.

Its subcellular location is the cytoplasm. The catalysed reaction is uridine + ATP = UMP + ADP + H(+). It carries out the reaction cytidine + ATP = CMP + ADP + H(+). The protein operates within pyrimidine metabolism; CTP biosynthesis via salvage pathway; CTP from cytidine: step 1/3. Its pathway is pyrimidine metabolism; UMP biosynthesis via salvage pathway; UMP from uridine: step 1/1. The chain is Uridine kinase from Pectobacterium atrosepticum (strain SCRI 1043 / ATCC BAA-672) (Erwinia carotovora subsp. atroseptica).